A 374-amino-acid polypeptide reads, in one-letter code: MYLKTLELHNFRNYADLVVEFGSGINVLLGENAQGKTNLLESIYFLALTRSHRTNSDRDLISWKTKAARVSGSVQKEHTVTPLEINLSSKGKNAKVNHLEQSRLSQYVGQLNVILFAPEDLSIVKGSPAVRRKFIDMEFGQMSSKYLYNSAQYRSVLKQRNQYIKQLQFNPKGDQVYLDVLSDQLAAHGAEIIFQRIQFLKKLEKWSQEVHKEISQGKEKLSFQYVSPISSDQADTTEKIYAALQALFQKQREKELQQGKTLVGPHLDDVRFMVNDKNVSTFGSQGQQRTTALSVKLAEIDLMKEETGEYPVLLLDDVLSELDDSRQTHLLTAIQNKVQTFITTTSLSGVAQQLINEPHVFNIDHGVLMQSKEE.

Residue 30-37 (GENAQGKT) coordinates ATP.

It belongs to the RecF family.

The protein resides in the cytoplasm. Its function is as follows. The RecF protein is involved in DNA metabolism; it is required for DNA replication and normal SOS inducibility. RecF binds preferentially to single-stranded, linear DNA. It also seems to bind ATP. The chain is DNA replication and repair protein RecF from Pediococcus pentosaceus (strain ATCC 25745 / CCUG 21536 / LMG 10740 / 183-1w).